We begin with the raw amino-acid sequence, 540 residues long: 2,3-bisphosphoglycerate-independent phosphoglycerate mutase (540 aa).

Mn(2+)-binding residues include D13 and S63. S63 acts as the Phosphoserine intermediate in catalysis. Residues H124, 154 to 155 (RD), R186, R192, 262 to 265 (RPDR), and K356 each bind substrate. Residues D423, H427, D464, H465, and H483 each contribute to the Mn(2+) site.

The protein belongs to the BPG-independent phosphoglycerate mutase family. As to quaternary structure, monomer. Mn(2+) is required as a cofactor.

It carries out the reaction (2R)-2-phosphoglycerate = (2R)-3-phosphoglycerate. It functions in the pathway carbohydrate degradation; glycolysis; pyruvate from D-glyceraldehyde 3-phosphate: step 3/5. Its function is as follows. Catalyzes the interconversion of 2-phosphoglycerate and 3-phosphoglycerate. This is 2,3-bisphosphoglycerate-independent phosphoglycerate mutase from Chloroflexus aggregans (strain MD-66 / DSM 9485).